Consider the following 189-residue polypeptide: uncharacterized protein (189 aa).

The next 4 helical transmembrane spans lie at 35 to 55 (IIWYGVSIAVIVILADMAVMK), 97 to 117 (GVLQTHIGLWTASLIFAALHF), 123 to 143 (WLLFIMVTAISFLLGLMYEWT), and 144 to 164 (GNLFVPMTAHFIIDAVFACQI).

Its subcellular location is the cell membrane. This is an uncharacterized protein from Bacillus subtilis (strain 168).